The following is a 236-amino-acid chain: 2-C-methyl-D-erythritol 4-phosphate cytidylyltransferase (236 aa).

The protein belongs to the IspD/TarI cytidylyltransferase family. IspD subfamily.

The enzyme catalyses 2-C-methyl-D-erythritol 4-phosphate + CTP + H(+) = 4-CDP-2-C-methyl-D-erythritol + diphosphate. It participates in isoprenoid biosynthesis; isopentenyl diphosphate biosynthesis via DXP pathway; isopentenyl diphosphate from 1-deoxy-D-xylulose 5-phosphate: step 2/6. In terms of biological role, catalyzes the formation of 4-diphosphocytidyl-2-C-methyl-D-erythritol from CTP and 2-C-methyl-D-erythritol 4-phosphate (MEP). The sequence is that of 2-C-methyl-D-erythritol 4-phosphate cytidylyltransferase from Azoarcus sp. (strain BH72).